Here is a 523-residue protein sequence, read N- to C-terminus: DELLA protein RGL3 (523 aa).

The disordered stretch occupies residues 1–28 (MKRSHQETSVEEEAPSMVEKLENGCGGG). The DELLA motif signature appears at 34 to 38 (DEFLA). An LEXLE motif motif is present at residues 56–60 (LEQLE). The VHYNP motif motif lies at 78–82 (VHYNP). Residues 148 to 516 (VLIEETGVRL…KPLIAASAWK (369 aa)) enclose the GRAS domain. Residues 155-209 (VRLVQALVACAEAVQLENLSLADALVKRVGLLAASQAGAMGKVATYFAEALARRI) form a leucine repeat I (LRI) region. The VHIID stretch occupies residues 228–293 (QMNFYDSCPY…GGPPSFRLTG (66 aa)). The VHIID motif lies at 259 to 263 (VHVID). Residues 305–337 (ELGWKLAQLAQAIGVEFKFNGLTTERLSDLEPD) form a leucine repeat II (LRII) region. The interval 348 to 437 (LVVNSVFELH…EVYLGRQILN (90 aa)) is PFYRE. An LXXLL motif motif is present at residues 356 to 360 (LHPVL). The interval 440–516 (ATEGSDRIER…KPLIAASAWK (77 aa)) is SAW.

This sequence belongs to the GRAS family. DELLA subfamily. Interacts directly with the GID2/SLY1 component of the SCF(GID2) complex, suggesting that it may be ubiquitinated. Interacts (via N-terminus) with GID1A, GID1B and GID1B (via N-terminus). Interacts with the BOI proteins BOI, BRG1, BRG2 and BRG3. In terms of processing, phosphorylated. May be ubiquitinated. In terms of tissue distribution, expressed at very low level. Mainly expressed in germinating seeds and flowers and siliques. Not expressed in other tissues.

Its subcellular location is the nucleus. Its function is as follows. Probable transcriptional regulator that acts as a repressor of the gibberellin (GA) signaling pathway. No effect of the BOI proteins on its stability. Probably acts by participating in large multiprotein complexes that repress transcription of GA-inducible genes. Its activity may be regulated by phytohormones such as auxin and ethylene. The chain is DELLA protein RGL3 (RGL3) from Arabidopsis thaliana (Mouse-ear cress).